Here is a 58-residue protein sequence, read N- to C-terminus: Large ribosomal subunit protein uL30 (58 aa).

It belongs to the universal ribosomal protein uL30 family. In terms of assembly, part of the 50S ribosomal subunit.

The chain is Large ribosomal subunit protein uL30 from Wigglesworthia glossinidia brevipalpis.